The following is a 274-amino-acid chain: 4-hydroxy-tetrahydrodipicolinate reductase (274 aa).

7 to 12 contributes to the NAD(+) binding site; sequence GVTGRM. Arg-40 provides a ligand contact to NADP(+). Residues 103–105 and 127–130 contribute to the NAD(+) site; these read GTT and SANF. His-160 serves as the catalytic Proton donor/acceptor. (S)-2,3,4,5-tetrahydrodipicolinate is bound at residue His-161. The active-site Proton donor is the Lys-164. 170-171 lines the (S)-2,3,4,5-tetrahydrodipicolinate pocket; it reads GT.

The protein belongs to the DapB family. Homotetramer.

It is found in the cytoplasm. The enzyme catalyses (S)-2,3,4,5-tetrahydrodipicolinate + NAD(+) + H2O = (2S,4S)-4-hydroxy-2,3,4,5-tetrahydrodipicolinate + NADH + H(+). The catalysed reaction is (S)-2,3,4,5-tetrahydrodipicolinate + NADP(+) + H2O = (2S,4S)-4-hydroxy-2,3,4,5-tetrahydrodipicolinate + NADPH + H(+). It participates in amino-acid biosynthesis; L-lysine biosynthesis via DAP pathway; (S)-tetrahydrodipicolinate from L-aspartate: step 4/4. In terms of biological role, catalyzes the conversion of 4-hydroxy-tetrahydrodipicolinate (HTPA) to tetrahydrodipicolinate. The protein is 4-hydroxy-tetrahydrodipicolinate reductase of Blochmanniella floridana.